A 338-amino-acid chain; its full sequence is Ketol-acid reductoisomerase (NADP(+)) (338 aa).

Residues 1 to 181 (MKVFYDKDAD…GGGRAGIIET (181 aa)) form the KARI N-terminal Rossmann domain. Residues 24–27 (YGSQ), Arg-47, and Ser-52 contribute to the NADP(+) site. The active site involves His-107. Gly-133 serves as a coordination point for NADP(+). The KARI C-terminal knotted domain occupies 182 to 327 (NFREETETDL…AKLRAMMPWI (146 aa)). 4 residues coordinate Mg(2+): Asp-190, Glu-194, Glu-226, and Glu-230. Residue Ser-251 coordinates substrate.

It belongs to the ketol-acid reductoisomerase family. Mg(2+) serves as cofactor.

It catalyses the reaction (2R)-2,3-dihydroxy-3-methylbutanoate + NADP(+) = (2S)-2-acetolactate + NADPH + H(+). The enzyme catalyses (2R,3R)-2,3-dihydroxy-3-methylpentanoate + NADP(+) = (S)-2-ethyl-2-hydroxy-3-oxobutanoate + NADPH + H(+). The protein operates within amino-acid biosynthesis; L-isoleucine biosynthesis; L-isoleucine from 2-oxobutanoate: step 2/4. Its pathway is amino-acid biosynthesis; L-valine biosynthesis; L-valine from pyruvate: step 2/4. Its function is as follows. Involved in the biosynthesis of branched-chain amino acids (BCAA). Catalyzes an alkyl-migration followed by a ketol-acid reduction of (S)-2-acetolactate (S2AL) to yield (R)-2,3-dihydroxy-isovalerate. In the isomerase reaction, S2AL is rearranged via a Mg-dependent methyl migration to produce 3-hydroxy-3-methyl-2-ketobutyrate (HMKB). In the reductase reaction, this 2-ketoacid undergoes a metal-dependent reduction by NADPH to yield (R)-2,3-dihydroxy-isovalerate. The chain is Ketol-acid reductoisomerase (NADP(+)) from Ralstonia pickettii (strain 12J).